We begin with the raw amino-acid sequence, 299 residues long: Diaminopimelate epimerase (299 aa).

Substrate contacts are provided by asparagine 13, glutamine 46, and asparagine 66. The active-site Proton donor is cysteine 75. Residues 76 to 77, asparagine 166, asparagine 199, and 217 to 218 each bind substrate; these read GN and ER. The Proton acceptor role is filled by cysteine 226. Residue 227-228 coordinates substrate; the sequence is GT.

Belongs to the diaminopimelate epimerase family. Homodimer.

Its subcellular location is the cytoplasm. The enzyme catalyses (2S,6S)-2,6-diaminopimelate = meso-2,6-diaminopimelate. The protein operates within amino-acid biosynthesis; L-lysine biosynthesis via DAP pathway; DL-2,6-diaminopimelate from LL-2,6-diaminopimelate: step 1/1. Its function is as follows. Catalyzes the stereoinversion of LL-2,6-diaminopimelate (L,L-DAP) to meso-diaminopimelate (meso-DAP), a precursor of L-lysine and an essential component of the bacterial peptidoglycan. This is Diaminopimelate epimerase from Paraburkholderia phytofirmans (strain DSM 17436 / LMG 22146 / PsJN) (Burkholderia phytofirmans).